Reading from the N-terminus, the 235-residue chain is 1-(5-phosphoribosyl)-5-[(5-phosphoribosylamino)methylideneamino] imidazole-4-carboxamide isomerase (235 aa).

Asp8 (proton acceptor) is an active-site residue. Asp128 acts as the Proton donor in catalysis.

It belongs to the HisA/HisF family.

It localises to the cytoplasm. The catalysed reaction is 1-(5-phospho-beta-D-ribosyl)-5-[(5-phospho-beta-D-ribosylamino)methylideneamino]imidazole-4-carboxamide = 5-[(5-phospho-1-deoxy-D-ribulos-1-ylimino)methylamino]-1-(5-phospho-beta-D-ribosyl)imidazole-4-carboxamide. It participates in amino-acid biosynthesis; L-histidine biosynthesis; L-histidine from 5-phospho-alpha-D-ribose 1-diphosphate: step 4/9. The sequence is that of 1-(5-phosphoribosyl)-5-[(5-phosphoribosylamino)methylideneamino] imidazole-4-carboxamide isomerase from Thermus thermophilus (strain ATCC BAA-163 / DSM 7039 / HB27).